Consider the following 335-residue polypeptide: DNA-directed RNA polymerase subunit alpha (335 aa).

An alpha N-terminal domain (alpha-NTD) region spans residues Met-1–Lys-231. Residues Lys-263–Phe-335 form an alpha C-terminal domain (alpha-CTD) region.

The protein belongs to the RNA polymerase alpha chain family. In plastids the minimal PEP RNA polymerase catalytic core is composed of four subunits: alpha, beta, beta', and beta''. When a (nuclear-encoded) sigma factor is associated with the core the holoenzyme is formed, which can initiate transcription.

The protein localises to the plastid. Its subcellular location is the chloroplast. The catalysed reaction is RNA(n) + a ribonucleoside 5'-triphosphate = RNA(n+1) + diphosphate. Its function is as follows. DNA-dependent RNA polymerase catalyzes the transcription of DNA into RNA using the four ribonucleoside triphosphates as substrates. In Helianthus annuus (Common sunflower), this protein is DNA-directed RNA polymerase subunit alpha.